Reading from the N-terminus, the 115-residue chain is Small ribosomal subunit protein bS16 (115 aa).

Residues 81–115 (GLAPKPTYNEQPKKSAPKAKAQERAKAAADAAAAA) are disordered.

It belongs to the bacterial ribosomal protein bS16 family.

This is Small ribosomal subunit protein bS16 from Gluconobacter oxydans (strain 621H) (Gluconobacter suboxydans).